Consider the following 399-residue polypeptide: Insertion element IS900 uncharacterized 42 kDa protein (399 aa).

It belongs to the transposase IS1111A/IS1328/IS1533 family.

The protein is Insertion element IS900 uncharacterized 42 kDa protein of Mycobacterium paratuberculosis.